Here is a 301-residue protein sequence, read N- to C-terminus: Putative ribosomal RNA methyltransferase PB17E12.10c (301 aa).

Positions 87, 89, 107, and 186 each coordinate S-adenosyl-L-methionine. K247 functions as the Proton acceptor in the catalytic mechanism.

Belongs to the class I-like SAM-binding methyltransferase superfamily. RNA methyltransferase RlmE family.

The enzyme catalyses a uridine in rRNA + S-adenosyl-L-methionine = a 2'-O-methyluridine in rRNA + S-adenosyl-L-homocysteine + H(+). This Schizosaccharomyces pombe (strain 972 / ATCC 24843) (Fission yeast) protein is Putative ribosomal RNA methyltransferase PB17E12.10c.